A 117-amino-acid polypeptide reads, in one-letter code: Large ribosomal subunit protein bL20 (117 aa).

Belongs to the bacterial ribosomal protein bL20 family.

In terms of biological role, binds directly to 23S ribosomal RNA and is necessary for the in vitro assembly process of the 50S ribosomal subunit. It is not involved in the protein synthesizing functions of that subunit. This chain is Large ribosomal subunit protein bL20, found in Helicobacter hepaticus (strain ATCC 51449 / 3B1).